Here is a 237-residue protein sequence, read N- to C-terminus: MVARLTAFLVCLVFSLATLVQRGYGDTDGFNLEDALKETSSVKQRWDHFSTTTRRPVTTRAPANPAERWDHVATTTTRRPGTTRAPSNPMELDGFDLEDALDDRNDLDGPKKPSAGEAGGWSDKDLEDIVEGGGYKPDKNKGGGGYGSNDDPGSGISTETGTIAGVASALAMALIGAVSSYISYQQKKFCFSIQQGLNADYVKGENLEAVVCEEPQVTYSKQETQSAEPPPPEPPRI.

The first 25 residues, 1–25 (MVARLTAFLVCLVFSLATLVQRGYG), serve as a signal peptide directing secretion. The Extracellular portion of the chain corresponds to 26 to 161 (DTDGFNLEDA…PGSGISTETG (136 aa)). A disordered region spans residues 47–157 (DHFSTTTRRP…SNDDPGSGIS (111 aa)). Composition is skewed to low complexity over residues 51–66 (TTTR…ANPA) and 74–84 (TTTTRRPGTTR). Over residues 102–111 (DDRNDLDGPK) the composition is skewed to basic and acidic residues. O-linked (Xyl...) (chondroitin sulfate) serine glycosylation occurs at serine 154. Residues 162–182 (TIAGVASALAMALIGAVSSYI) traverse the membrane as a helical segment. Residues 183 to 237 (SYQQKKFCFSIQQGLNADYVKGENLEAVVCEEPQVTYSKQETQSAEPPPPEPPRI) lie on the Cytoplasmic side of the membrane. Residues 218 to 227 (TYSKQETQSA) are compositionally biased toward polar residues. The tract at residues 218 to 237 (TYSKQETQSAEPPPPEPPRI) is disordered. The span at 228–237 (EPPPPEPPRI) shows a compositional bias: pro residues.

It belongs to the CD99 family. In terms of processing, O-glycosylated. Highly expressed in the nervous system, including brain, dentate nucleus of hippocampus, granular and Purkinje cells of cerebellum, brain stem nucleus and choroid plexus. Expressed in peripheral blood T- and B-cells and neutrophils (at protein level). Almost undetectable in bone marrow-derived neutrophils (at protein level). Also expressed in thymocytes (at protein level) with higher expression in cortical thymocytes than in medullary thymocytes. Expressed at high levels in testis (mostly in germ cells and Sertoli cells) and ovary (mostly in granulosa cells). Expressed in lung, heart, kidney and liver (at protein level); however, expression in heart, kidney and liver seems restricted to endothelial cells (at protein level). Highly expressed in endothelial cells and to a lower level in vascular smooth muscle cells (at protein level). Low expression in spleen.

It localises to the cell membrane. It is found in the cell junction. The protein resides in the secreted. Its function is as follows. Plays a role in a late step of leukocyte extravasation helping cells to overcome the endothelial basement membrane. Acts at the same site as, but independently of, PECAM1. Homophilic adhesion molecule, but these interactions may not be required for cell aggregation. The sequence is that of CD99 antigen-like protein 2 (Cd99l2) from Mus musculus (Mouse).